The primary structure comprises 200 residues: RPW8-like protein 4 (200 aa).

One can recognise an RPW8 domain in the interval 1 to 157; it reads MPIAELAVIK…MKAIQVDQWT (157 aa). Residues 7–29 form a helical membrane-spanning segment; sequence AVIKTVGGPLIAAALGVGAQVIY. Residues 70 to 127 adopt a coiled-coil conformation; the sequence is REVHESLTRLLEDAKSIIEKYWKLRWSRHVCRKYRYIKKLESIELELVRVAREIQVHQ.

The protein belongs to the plant RPW8 protein family.

The protein localises to the membrane. Its function is as follows. Probable disease resistance (R) protein. The polypeptide is RPW8-like protein 4 (HR4) (Arabidopsis thaliana (Mouse-ear cress)).